The sequence spans 963 residues: Protocadherin alpha-C1 (963 aa).

The first 18 residues, 1–18 (MVGWGVAVLCLWVSCGAA), serve as a signal peptide directing secretion. Cadherin domains follow at residues 19 to 124 (AGQL…SPLF), 125 to 233 (PAGD…APVF), 234 to 340 (ERSV…APEL), 349 to 445 (VPED…TPSF), and 446 to 555 (PQPQ…YPVI). Over 19-683 (AGQLEYSVPE…GGQLSAQNLY (665 aa)) the chain is Extracellular. An N-linked (GlcNAc...) asparagine glycan is attached at N38. N-linked (GlcNAc...) asparagine glycosylation is found at N248 and N274. The N-linked (GlcNAc...) asparagine glycan is linked to N562. Positions 570-667 (VPRSARTGHL…NSVPQLLPDF (98 aa)) constitute a Cadherin 6 domain. Residues 684–704 (LVIALACISFLFLGCLLFFVC) form a helical membrane-spanning segment. Over 705-963 (TKLHQSPGCC…GNSTTDNSDQ (259 aa)) the chain is Cytoplasmic. 4 PXXP repeats span residues 812–815 (PRQP), 845–848 (PGGP), 886–889 (PGNP), and 904–907 (PGSP). The interval 812 to 907 (PRQPNPDWRY…PDKFIIPGSP (96 aa)) is 4 X 4 AA repeats of P-X-X-P. The disordered stretch occupies residues 844–902 (GPGGPDQQWPTVSSATPEPEAGEVSPPVGAGVNSNSWTFKYGPGNPKQSGPGELPDKFI). Positions 914 to 963 (QEPANSQIDKSDFITFGKKEETKKKKKKKKGNKTQEKKEKGNSTTDNSDQ) are disordered. The segment covering 922–936 (DKSDFITFGKKEETK) has biased composition (basic and acidic residues).

Its subcellular location is the cell membrane. Potential calcium-dependent cell-adhesion protein. May be involved in the establishment and maintenance of specific neuronal connections in the brain. The chain is Protocadherin alpha-C1 (PCDHAC1) from Pan troglodytes (Chimpanzee).